A 467-amino-acid polypeptide reads, in one-letter code: Ribulose bisphosphate carboxylase large chain (467 aa).

Positions 1-2 are excised as a propeptide; sequence MS. Proline 3 is subject to N-acetylproline. Lysine 14 carries the N6,N6,N6-trimethyllysine modification. The substrate site is built by asparagine 123 and threonine 173. Catalysis depends on lysine 175, which acts as the Proton acceptor. Lysine 177 serves as a coordination point for substrate. Mg(2+) contacts are provided by lysine 201, aspartate 203, and glutamate 204. Position 201 is an N6-carboxylysine (lysine 201). Histidine 294 (proton acceptor) is an active-site residue. Positions 295, 327, and 379 each coordinate substrate.

This sequence belongs to the RuBisCO large chain family. Type I subfamily. Heterohexadecamer of 8 large chains and 8 small chains; disulfide-linked. The disulfide link is formed within the large subunit homodimers. Requires Mg(2+) as cofactor. Post-translationally, the disulfide bond which can form in the large chain dimeric partners within the hexadecamer appears to be associated with oxidative stress and protein turnover.

Its subcellular location is the plastid. The protein resides in the chloroplast. The enzyme catalyses 2 (2R)-3-phosphoglycerate + 2 H(+) = D-ribulose 1,5-bisphosphate + CO2 + H2O. It catalyses the reaction D-ribulose 1,5-bisphosphate + O2 = 2-phosphoglycolate + (2R)-3-phosphoglycerate + 2 H(+). In terms of biological role, ruBisCO catalyzes two reactions: the carboxylation of D-ribulose 1,5-bisphosphate, the primary event in carbon dioxide fixation, as well as the oxidative fragmentation of the pentose substrate in the photorespiration process. Both reactions occur simultaneously and in competition at the same active site. In Calamus usitatus (Palm tree), this protein is Ribulose bisphosphate carboxylase large chain.